A 317-amino-acid chain; its full sequence is MEAVTIVDVAPRDGLQNEPDVLEPATRVELIERLLAAGVPRIEIGSFVNPRQVPQMAGIDQIARMLIERGHNLAARTTNDLFRFTALVPNQRGYELAAAAGLRHVRLVLAASDGLNRANFKRTTAESLIEFSRFALNIRRDGLTFGVAIGAAFGCPFDGYVSPERVRAIAEHAVDIGAGEIILADTTGMAVPTQVAALCRTILDRIPDVTVTLHLHNTRNTGYANAFAAWQVGIRSFDAALGGIGGCPFAPRAVGNIASEDLVHLFNGLGVPTGIDLSALIAASDWLSATLGRPLPALVGKAGPVYPQVVSMAPYLS.

One can recognise a Pyruvate carboxyltransferase domain in the interval V4–I281. Residue R12 coordinates substrate. Positions 13, 214, and 216 each coordinate a divalent metal cation. C247 is a catalytic residue. N256 is an a divalent metal cation binding site.

It belongs to the HMG-CoA lyase family. In terms of assembly, homodimer. The cofactor is Mn(2+). Co(2+) is required as a cofactor. Ni(2+) serves as cofactor. It depends on Mg(2+) as a cofactor.

The enzyme catalyses (3R)-citramalyl-CoA = pyruvate + acetyl-CoA. Its activity is regulated as follows. Activated by dithioerythritol (DTE) (in vitro). In terms of biological role, involved in the glyoxylate assimilation cycle used to regenerate acetyl-CoA and produce pyruvate as universal precursor for biosynthesis. Catalyzes the cleavage of (R)-citramalyl-CoA to yield acetyl-CoA and pyruvate. In Chloroflexus aurantiacus (strain ATCC 29366 / DSM 635 / J-10-fl), this protein is (R)-citramalyl-CoA lyase (ccl).